The chain runs to 475 residues: Secreted triacylglycerol lipase LIP5 (475 aa).

Positions 1-19 (MYPCTLLMVLLCLAIMTHG) are cleaved as a signal peptide. C129 and C300 are oxidised to a cystine. Catalysis depends on S213, which acts as the Nucleophile. N-linked (GlcNAc...) asparagine glycans are attached at residues N246 and N312. D360 is an active-site residue. N-linked (GlcNAc...) asparagine glycosylation occurs at N369. The active site involves H394. N471 carries N-linked (GlcNAc...) asparagine glycosylation.

This sequence belongs to the AB hydrolase superfamily. Lipase family. Class Lip subfamily.

The catalysed reaction is a triacylglycerol + H2O = a diacylglycerol + a fatty acid + H(+). It catalyses the reaction a monoacylglycerol + H2O = glycerol + a fatty acid + H(+). The enzyme catalyses a diacylglycerol + H2O = a monoacylglycerol + a fatty acid + H(+). Secreted lipase involved in Dandruff and seborrheic dermatitis (D/SD) probably via lipase-mediated breakdown of sebaceous lipids and release of irritating free fatty acids. Has triacylglycerol lipase activity and is able to hydrolyze triolein. Mostly converts monoolein to di- and triolein, while free fatty acids are only produced in low amounts. The polypeptide is Secreted triacylglycerol lipase LIP5 (Malassezia globosa (strain ATCC MYA-4612 / CBS 7966) (Dandruff-associated fungus)).